The chain runs to 792 residues: Ribonucleoside-diphosphate reductase large subunit (792 aa).

One can recognise an ATP-cone domain in the interval Met-1–Lys-92. Residues Lys-5–Arg-6, Glu-11–Lys-17, Thr-53, and Asp-57 contribute to the ATP site. Lys-17 carries the post-translational modification N6-acetyllysine. 2 residues coordinate GDP: Ser-202 and Ser-217. Cys-218 and Cys-444 form a disulfide bridge. DTTP is bound by residues Asp-226–Ile-228, Lys-243, Arg-256, and Ala-263–Gly-264. Lys-376 is subject to N6-acetyllysine. Asn-427 contributes to the GDP binding site. The Proton acceptor role is filled by Asn-427. The Cysteine radical intermediate role is filled by Cys-429. GDP-binding positions include Glu-431 and Thr-604 to Thr-607. Glu-431 acts as the Proton acceptor in catalysis. Phosphothreonine is present on Thr-751.

This sequence belongs to the ribonucleoside diphosphate reductase large chain family. As to quaternary structure, heterodimer of a large and a small subunit. Interacts with RRM2B. Interacts with AHCYL1 which inhibits its activity.

Its subcellular location is the cytoplasm. The enzyme catalyses a 2'-deoxyribonucleoside 5'-diphosphate + [thioredoxin]-disulfide + H2O = a ribonucleoside 5'-diphosphate + [thioredoxin]-dithiol. Under complex allosteric control mediated by deoxynucleoside triphosphates and ATP binding to separate specificity and activation sites on the M1 subunit. The type of nucleotide bound at the specificity site determines substrate preference. It seems probable that ATP makes the enzyme reduce CDP and UDP, dGTP favors ADP reduction and dTTP favors GDP reduction. Stimulated by ATP and inhibited by dATP binding to the activity site, the dATP inhibition is mediated by AHCYL1 which stabilizes dATP in the site. Provides the precursors necessary for DNA synthesis. Catalyzes the biosynthesis of deoxyribonucleotides from the corresponding ribonucleotides. The protein is Ribonucleoside-diphosphate reductase large subunit (Rrm1) of Mus musculus (Mouse).